Consider the following 601-residue polypeptide: Elongation factor 4 (601 aa).

Positions 4–186 constitute a tr-type G domain; that stretch reads SFIRNFAIIA…SIVHLVPPPK (183 aa). GTP contacts are provided by residues 16-21 and 133-136; these read DHGKST and NKID.

The protein belongs to the TRAFAC class translation factor GTPase superfamily. Classic translation factor GTPase family. LepA subfamily.

The protein resides in the cell inner membrane. The enzyme catalyses GTP + H2O = GDP + phosphate + H(+). In terms of biological role, required for accurate and efficient protein synthesis under certain stress conditions. May act as a fidelity factor of the translation reaction, by catalyzing a one-codon backward translocation of tRNAs on improperly translocated ribosomes. Back-translocation proceeds from a post-translocation (POST) complex to a pre-translocation (PRE) complex, thus giving elongation factor G a second chance to translocate the tRNAs correctly. Binds to ribosomes in a GTP-dependent manner. The chain is Elongation factor 4 from Koribacter versatilis (strain Ellin345).